The chain runs to 226 residues: Pyridoxal 5'-phosphate synthase subunit PdxT (226 aa).

60–62 (GES) serves as a coordination point for L-glutamine. The Nucleophile role is filled by C92. Residues R121 and 150–151 (IR) contribute to the L-glutamine site. Residues H191 and E193 each act as charge relay system in the active site.

This sequence belongs to the glutaminase PdxT/SNO family. As to quaternary structure, in the presence of PdxS, forms a dodecamer of heterodimers. Only shows activity in the heterodimer.

It catalyses the reaction aldehydo-D-ribose 5-phosphate + D-glyceraldehyde 3-phosphate + L-glutamine = pyridoxal 5'-phosphate + L-glutamate + phosphate + 3 H2O + H(+). The catalysed reaction is L-glutamine + H2O = L-glutamate + NH4(+). It functions in the pathway cofactor biosynthesis; pyridoxal 5'-phosphate biosynthesis. Functionally, catalyzes the hydrolysis of glutamine to glutamate and ammonia as part of the biosynthesis of pyridoxal 5'-phosphate. The resulting ammonia molecule is channeled to the active site of PdxS. This chain is Pyridoxal 5'-phosphate synthase subunit PdxT, found in Nocardia farcinica (strain IFM 10152).